An 880-amino-acid chain; its full sequence is DNA mismatch repair protein MutS (880 aa).

An ATP-binding site is contributed by 625-632; sequence GPNMAGKS.

The protein belongs to the DNA mismatch repair MutS family.

Functionally, this protein is involved in the repair of mismatches in DNA. It is possible that it carries out the mismatch recognition step. This protein has a weak ATPase activity. The sequence is that of DNA mismatch repair protein MutS from Alkaliphilus oremlandii (strain OhILAs) (Clostridium oremlandii (strain OhILAs)).